The sequence spans 207 residues: Guanylate kinase (207 aa).

The Guanylate kinase-like domain maps to 4 to 184 (GTLYIVSAPS…ALMDFKAIIR (181 aa)). 11–18 (APSGAGKS) provides a ligand contact to ATP.

Belongs to the guanylate kinase family.

The protein resides in the cytoplasm. The enzyme catalyses GMP + ATP = GDP + ADP. Functionally, essential for recycling GMP and indirectly, cGMP. This chain is Guanylate kinase, found in Vibrio vulnificus (strain CMCP6).